The primary structure comprises 762 residues: MLALRRFILNQRSLRSCTIPILVGALIIILVLFQLVTHRNDALIRSSNVNSTNKKTLKDADPKVLIEAFGSPEVDPVDTIPVSPLELVPFYDQSIDTKRSSSWLINKKGYYKHFNELSLTDRCKFYFRTLYTLDDEWTNSVKKLEYSINDNEGVDEGKDANGNPMDEKSERLYRRKYDMFQAFERIRAYDRCFMQANPVNIQEIFPKSDKMSKERVQSKLIKTLNATFPNYDPDNFKKYDQFEFEHKMFPFINNFTTETFHEMVPKITSPFGKVLEQGFLPKFDHKTGKVQEYFKYEYDPSKTFWANWRDMSAKVAGRGIVLSLGSNQFPLAVKFIASLRFEGNTLPIQVVYRGDELSQELVDKLIYAARSPDFKPVENNYDNSTNVPQEIWFLDVSNTIHPKWRGDFGSYKSKWLVVLLNLLQEFVFLDIDAISYEKIDNYFKTTEYQKTGTVFYRERALRENVNERCIARYETLLPRNLESKNFQNSLLIDPDHALNECDNTLTTEEYIFKAFFHHRRQHQLEAGLFAVDKSKHTIPLVLAAMIHLAKNTAHCTHGDKENFWLGFLAAGHTYALQGVYSGAIGDYVKKTDLNGKRQEAAVEICSGQIAHMSTDKKTLLWVNGGGTFCKHDNAAKDDWKKDGDFKKFKDQFKTFEEMEKYYYITPISSKYVILPDPKSDDWHRASAGACGGYIWCATHKTLLKPYSYNHRTTHGELITLDEEQRLHIDAVNTVWSHANKDNTRSFTEEEIKELENSRHEQS.

The Cytoplasmic segment spans residues 1–16; the sequence is MLALRRFILNQRSLRS. Residues 17–33 traverse the membrane as a helical; Signal-anchor for type II membrane protein segment; the sequence is CTIPILVGALIIILVLF. Residues 34–762 are Lumenal-facing; it reads QLVTHRNDAL…ELENSRHEQS (729 aa). N-linked (GlcNAc...) asparagine glycosylation is found at Asn-50, Asn-225, Asn-254, and Asn-383.

Belongs to the MNN1/MNT family.

The protein localises to the golgi apparatus membrane. It participates in protein modification; protein glycosylation. In terms of biological role, responsible for addition of the terminal mannose residues to the outer chain of core N-linked polysaccharides and to O-linked mannotriose. Implicated in late Golgi modifications. This is Alpha-1,3-mannosyltransferase MNN1 (MNN1) from Saccharomyces cerevisiae (strain ATCC 204508 / S288c) (Baker's yeast).